An 85-amino-acid chain; its full sequence is BmK AGP-SYPU2 (85 aa).

An N-terminal signal peptide occupies residues 1–19; sequence MNYMVIISLALLVMTGVES. The region spanning 21 to 83 is the LCN-type CS-alpha/beta domain; that stretch reads KDGYIADDRN…ARIMKPGRCN (63 aa). Disulfide bonds link C31–C82, C35–C55, C41–C65, and C45–C67.

It belongs to the long (4 C-C) scorpion toxin superfamily. Sodium channel inhibitor family. Alpha subfamily. In terms of tissue distribution, expressed by the venom gland.

It is found in the secreted. Functionally, alpha toxins bind voltage-independently at site-3 of sodium channels (Nav) and inhibit the inactivation of the activated channels, thereby blocking neuronal transmission. Shows analgesic activity when intraperitoneally injected into mice. In Olivierus martensii (Manchurian scorpion), this protein is BmK AGP-SYPU2.